The chain runs to 347 residues: Holliday junction branch migration complex subunit RuvB (347 aa).

Positions glutamine 4–tyrosine 184 are large ATPase domain (RuvB-L). Residues arginine 24, glycine 65, lysine 68, threonine 69, threonine 70, glutamate 131 to phenylalanine 133, arginine 174, tyrosine 184, and arginine 221 contribute to the ATP site. Threonine 69 is a binding site for Mg(2+). Positions serine 185–asparagine 255 are small ATPAse domain (RuvB-S). Residues histidine 258–isoleucine 347 are head domain (RuvB-H). Positions 294, 313, and 318 each coordinate DNA.

Belongs to the RuvB family. As to quaternary structure, homohexamer. Forms an RuvA(8)-RuvB(12)-Holliday junction (HJ) complex. HJ DNA is sandwiched between 2 RuvA tetramers; dsDNA enters through RuvA and exits via RuvB. An RuvB hexamer assembles on each DNA strand where it exits the tetramer. Each RuvB hexamer is contacted by two RuvA subunits (via domain III) on 2 adjacent RuvB subunits; this complex drives branch migration. In the full resolvosome a probable DNA-RuvA(4)-RuvB(12)-RuvC(2) complex forms which resolves the HJ.

It localises to the cytoplasm. It catalyses the reaction ATP + H2O = ADP + phosphate + H(+). In terms of biological role, the RuvA-RuvB-RuvC complex processes Holliday junction (HJ) DNA during genetic recombination and DNA repair, while the RuvA-RuvB complex plays an important role in the rescue of blocked DNA replication forks via replication fork reversal (RFR). RuvA specifically binds to HJ cruciform DNA, conferring on it an open structure. The RuvB hexamer acts as an ATP-dependent pump, pulling dsDNA into and through the RuvAB complex. RuvB forms 2 homohexamers on either side of HJ DNA bound by 1 or 2 RuvA tetramers; 4 subunits per hexamer contact DNA at a time. Coordinated motions by a converter formed by DNA-disengaged RuvB subunits stimulates ATP hydrolysis and nucleotide exchange. Immobilization of the converter enables RuvB to convert the ATP-contained energy into a lever motion, pulling 2 nucleotides of DNA out of the RuvA tetramer per ATP hydrolyzed, thus driving DNA branch migration. The RuvB motors rotate together with the DNA substrate, which together with the progressing nucleotide cycle form the mechanistic basis for DNA recombination by continuous HJ branch migration. Branch migration allows RuvC to scan DNA until it finds its consensus sequence, where it cleaves and resolves cruciform DNA. The chain is Holliday junction branch migration complex subunit RuvB from Teredinibacter turnerae (strain ATCC 39867 / T7901).